A 374-amino-acid polypeptide reads, in one-letter code: Chaperone protein DnaJ (374 aa).

One can recognise a J domain in the interval 4 to 69 (SYYEILEITQ…EKRAIYDRYG (66 aa)). The segment at 136–213 (GCKKNIDFTY…CKGLGYNESK (78 aa)) adopts a CR-type zinc-finger fold. Residues Cys149, Cys152, Cys165, Cys168, Cys187, Cys190, Cys201, and Cys204 each contribute to the Zn(2+) site. 4 CXXCXGXG motif repeats span residues 149–156 (CKTCNGTG), 165–172 (CPKCQGRG), 187–194 (CPDCQGSG), and 201–208 (CNDCKGLG).

The protein belongs to the DnaJ family. As to quaternary structure, homodimer. The cofactor is Zn(2+).

It is found in the cytoplasm. In terms of biological role, participates actively in the response to hyperosmotic and heat shock by preventing the aggregation of stress-denatured proteins and by disaggregating proteins, also in an autonomous, DnaK-independent fashion. Unfolded proteins bind initially to DnaJ; upon interaction with the DnaJ-bound protein, DnaK hydrolyzes its bound ATP, resulting in the formation of a stable complex. GrpE releases ADP from DnaK; ATP binding to DnaK triggers the release of the substrate protein, thus completing the reaction cycle. Several rounds of ATP-dependent interactions between DnaJ, DnaK and GrpE are required for fully efficient folding. Also involved, together with DnaK and GrpE, in the DNA replication of plasmids through activation of initiation proteins. The protein is Chaperone protein DnaJ of Campylobacter jejuni subsp. doylei (strain ATCC BAA-1458 / RM4099 / 269.97).